A 410-amino-acid chain; its full sequence is Arginine deiminase (410 aa).

Residue Cys-400 is the Amidino-cysteine intermediate of the active site.

The protein belongs to the arginine deiminase family.

The protein localises to the cytoplasm. The enzyme catalyses L-arginine + H2O = L-citrulline + NH4(+). It participates in amino-acid degradation; L-arginine degradation via ADI pathway; carbamoyl phosphate from L-arginine: step 1/2. This Bacillus thuringiensis subsp. konkukian (strain 97-27) protein is Arginine deiminase.